The primary structure comprises 155 residues: Ribosomal RNA large subunit methyltransferase H (155 aa).

S-adenosyl-L-methionine-binding positions include leucine 72, glycine 104, and 123 to 128 (LAKITL).

This sequence belongs to the RNA methyltransferase RlmH family. Homodimer.

It localises to the cytoplasm. It carries out the reaction pseudouridine(1915) in 23S rRNA + S-adenosyl-L-methionine = N(3)-methylpseudouridine(1915) in 23S rRNA + S-adenosyl-L-homocysteine + H(+). Functionally, specifically methylates the pseudouridine at position 1915 (m3Psi1915) in 23S rRNA. This is Ribosomal RNA large subunit methyltransferase H from Mycoplasma capricolum subsp. capricolum (strain California kid / ATCC 27343 / NCTC 10154).